The chain runs to 479 residues: Monodehydroascorbate reductase 1, peroxisomal (479 aa).

Topologically, residues 1 to 3 (MGR) are cytoplasmic. Residues 4–24 (AFEYVILGGGVAAGYAALEFV) traverse the membrane as a helical segment. FAD contacts are provided by residues 12 to 15 (GGVA), E41, R48, K53, and 147 to 148 (RN). The Peroxisomal portion of the chain corresponds to 25-445 (RRNGGASSQE…QATGGGGKPT (421 aa)). NAD(+) is bound by residues 172 to 178 (GGYIGME), R202, and G260. Residues 174 to 178 (YIGME), R202, and G260 contribute to the NADP(+) site. D297 contributes to the FAD binding site. Residue 314-315 (EH) participates in NAD(+) binding. 314 to 315 (EH) is an NADP(+) binding site. V316 is an FAD binding site. Residue R320 coordinates L-ascorbate. Y347 lines the FAD pocket. Y347 is a binding site for NAD(+). Y347 contacts NADP(+). Residue R349 coordinates L-ascorbate. A helical transmembrane segment spans residues 446–466 (CAWHATVGVAAAVSIAAFACW). Over 467–479 (YGWQAPYVLKRDF) the chain is Cytoplasmic.

The protein belongs to the FAD-dependent oxidoreductase family. The cofactor is FAD.

It localises to the peroxisome membrane. It catalyses the reaction 2 monodehydro-L-ascorbate radical + NADH + H(+) = 2 L-ascorbate + NAD(+). Its function is as follows. Catalyzes the conversion of monodehydroascorbate to ascorbate, oxidizing NADH in the process. Ascorbate is a major antioxidant against reactive oxygen species (ROS) and nitric oxide (NO). This is Monodehydroascorbate reductase 1, peroxisomal from Oryza sativa subsp. japonica (Rice).